A 429-amino-acid polypeptide reads, in one-letter code: Enolase (429 aa).

(2R)-2-phosphoglycerate is bound at residue Q163. Residue E205 is the Proton donor of the active site. 3 residues coordinate Mg(2+): D242, E287, and D314. 4 residues coordinate (2R)-2-phosphoglycerate: K339, R368, S369, and K390. K339 acts as the Proton acceptor in catalysis.

Belongs to the enolase family. Mg(2+) serves as cofactor.

Its subcellular location is the cytoplasm. It is found in the secreted. It localises to the cell surface. The enzyme catalyses (2R)-2-phosphoglycerate = phosphoenolpyruvate + H2O. It participates in carbohydrate degradation; glycolysis; pyruvate from D-glyceraldehyde 3-phosphate: step 4/5. Its function is as follows. Catalyzes the reversible conversion of 2-phosphoglycerate (2-PG) into phosphoenolpyruvate (PEP). It is essential for the degradation of carbohydrates via glycolysis. The sequence is that of Enolase from Anaeromyxobacter dehalogenans (strain 2CP-C).